The sequence spans 592 residues: 2-succinyl-5-enolpyruvyl-6-hydroxy-3-cyclohexene-1-carboxylate synthase (592 aa).

Belongs to the TPP enzyme family. MenD subfamily. In terms of assembly, homodimer. It depends on Mg(2+) as a cofactor. Mn(2+) is required as a cofactor. Requires thiamine diphosphate as cofactor.

The enzyme catalyses isochorismate + 2-oxoglutarate + H(+) = 5-enolpyruvoyl-6-hydroxy-2-succinyl-cyclohex-3-ene-1-carboxylate + CO2. It participates in quinol/quinone metabolism; 1,4-dihydroxy-2-naphthoate biosynthesis; 1,4-dihydroxy-2-naphthoate from chorismate: step 2/7. The protein operates within quinol/quinone metabolism; menaquinone biosynthesis. Catalyzes the thiamine diphosphate-dependent decarboxylation of 2-oxoglutarate and the subsequent addition of the resulting succinic semialdehyde-thiamine pyrophosphate anion to isochorismate to yield 2-succinyl-5-enolpyruvyl-6-hydroxy-3-cyclohexene-1-carboxylate (SEPHCHC). The polypeptide is 2-succinyl-5-enolpyruvyl-6-hydroxy-3-cyclohexene-1-carboxylate synthase (Leifsonia xyli subsp. xyli (strain CTCB07)).